We begin with the raw amino-acid sequence, 433 residues long: B3 domain-containing protein Os04g0676600 (433 aa).

2 disordered regions span residues 1–29 (MADTRGSTSSGGGDDRGREGHDDFTGGGQ) and 216–283 (FPPV…NSAN). Over residues 13–24 (GDDRGREGHDDF) the composition is skewed to basic and acidic residues. Positions 216-229 (FPPVSSSSRSFSSA) are enriched in low complexity. Over residues 237–265 (DAKKAKKSDIKDQPIVLRRSDTESEKNDE) the composition is skewed to basic and acidic residues. Over residues 269–283 (TPASEPSSMSHNSAN) the composition is skewed to polar residues. Positions 297-399 (LRKELTNSDV…KLVVRGEKAI (103 aa)) form a DNA-binding region, TF-B3.

The protein localises to the nucleus. Functionally, probable transcription regulator that binds specifically to the DNA sequence 5'-CATGC-3' of the IDE1 element found in the promoter of the barley iron deficiency-inducible gene IDS2. This chain is B3 domain-containing protein Os04g0676600, found in Oryza sativa subsp. japonica (Rice).